The sequence spans 432 residues: T-box transcription factor T (432 aa).

The segment at residues leucine 49–aspartate 217 is a DNA-binding region (T-box). The interval cysteine 274 to serine 306 is disordered. The span at threonine 293 to serine 306 shows a compositional bias: polar residues.

As to quaternary structure, when not bound to DNA, exists as a monomer. Binds DNA as a dimer. Expressed in presumptive mesodermal cells around the blastopore, and then in the notochord.

It is found in the nucleus. Its function is as follows. Involved in the transcriptional regulation of genes required for mesoderm formation and differentiation. Binds to the palindromic T site 5'-TTCACACCTAGGTGTGAA-3' DNA sequence. Causes dorsal mesodermal differentiation of animal cap ectoderm when co-expressed with wnt8 and noggin. None of these molecules causes dorsal mesoderm formation when expressed alone. Establishes the left/right axis at early gastrula stage by directly up-regulating mesodermal expression of zic3. In Xenopus laevis (African clawed frog), this protein is T-box transcription factor T.